Reading from the N-terminus, the 179-residue chain is Large ribosomal subunit protein uL5 (179 aa).

The protein belongs to the universal ribosomal protein uL5 family. As to quaternary structure, part of the 50S ribosomal subunit; part of the 5S rRNA/L5/L18/L25 subcomplex. Contacts the 5S rRNA and the P site tRNA. Forms a bridge to the 30S subunit in the 70S ribosome.

Functionally, this is one of the proteins that bind and probably mediate the attachment of the 5S RNA into the large ribosomal subunit, where it forms part of the central protuberance. In the 70S ribosome it contacts protein S13 of the 30S subunit (bridge B1b), connecting the 2 subunits; this bridge is implicated in subunit movement. Contacts the P site tRNA; the 5S rRNA and some of its associated proteins might help stabilize positioning of ribosome-bound tRNAs. The sequence is that of Large ribosomal subunit protein uL5 from Anoxybacillus flavithermus (strain DSM 21510 / WK1).